Consider the following 247-residue polypeptide: 4-hydroxy-tetrahydrodipicolinate reductase (247 aa).

NAD(+) contacts are provided by residues 9–14 (GAAGRM), 76–78 (GTT), and 103–106 (APNF). Catalysis depends on H133, which acts as the Proton donor/acceptor. H134 lines the (S)-2,3,4,5-tetrahydrodipicolinate pocket. Catalysis depends on K137, which acts as the Proton donor. (S)-2,3,4,5-tetrahydrodipicolinate is bound at residue 143-144 (GT).

This sequence belongs to the DapB family.

It is found in the cytoplasm. It carries out the reaction (S)-2,3,4,5-tetrahydrodipicolinate + NAD(+) + H2O = (2S,4S)-4-hydroxy-2,3,4,5-tetrahydrodipicolinate + NADH + H(+). The catalysed reaction is (S)-2,3,4,5-tetrahydrodipicolinate + NADP(+) + H2O = (2S,4S)-4-hydroxy-2,3,4,5-tetrahydrodipicolinate + NADPH + H(+). It functions in the pathway amino-acid biosynthesis; L-lysine biosynthesis via DAP pathway; (S)-tetrahydrodipicolinate from L-aspartate: step 4/4. Its function is as follows. Catalyzes the conversion of 4-hydroxy-tetrahydrodipicolinate (HTPA) to tetrahydrodipicolinate. This is 4-hydroxy-tetrahydrodipicolinate reductase from Beutenbergia cavernae (strain ATCC BAA-8 / DSM 12333 / CCUG 43141 / JCM 11478 / NBRC 16432 / NCIMB 13614 / HKI 0122).